Reading from the N-terminus, the 98-residue chain is NADH-ubiquinone oxidoreductase chain 4L (98 aa).

A run of 3 helical transmembrane segments spans residues 1–21, 29–49, and 61–81; these read MSMV…GLLM, SLLC…MVVL, and IILL…LVMV.

This sequence belongs to the complex I subunit 4L family. As to quaternary structure, core subunit of respiratory chain NADH dehydrogenase (Complex I) which is composed of 45 different subunits.

It localises to the mitochondrion inner membrane. The enzyme catalyses a ubiquinone + NADH + 5 H(+)(in) = a ubiquinol + NAD(+) + 4 H(+)(out). Core subunit of the mitochondrial membrane respiratory chain NADH dehydrogenase (Complex I) which catalyzes electron transfer from NADH through the respiratory chain, using ubiquinone as an electron acceptor. Part of the enzyme membrane arm which is embedded in the lipid bilayer and involved in proton translocation. The protein is NADH-ubiquinone oxidoreductase chain 4L (MT-ND4L) of Acinonyx jubatus (Cheetah).